Here is a 509-residue protein sequence, read N- to C-terminus: Maturase K (509 aa).

The protein belongs to the intron maturase 2 family. MatK subfamily.

The protein resides in the plastid. It is found in the chloroplast. In terms of biological role, usually encoded in the trnK tRNA gene intron. Probably assists in splicing its own and other chloroplast group II introns. The polypeptide is Maturase K (Nicotiana rustica (Aztec tobacco)).